The following is a 235-amino-acid chain: MIYAGILAGGTGTRMGISNLPKQFLELGDRPILIHTIEKFVLEPSIEKIVVGVHGDWVSHAEDLVDKYLPLYKERIIITKGGADRNTSIKKIIEAIDAYRPLTPEDIVVTHDSVRPFITLRMIQDNIQLAQNHDAVDTVVEAVDTIVESTNGQFITDIPNRAHLYQGQTPQTFRCKDFMDLYGSLSDEEKEILTDACKIFVIKGKDVALAKGEYSNLKITTVTDLKIAKSMIEKD.

CTP is bound by residues 7–10, 82–88, and S113; these read LAGG and GADRNTS.

This sequence belongs to the IspD/TarI cytidylyltransferase family. TarI subfamily.

It carries out the reaction D-ribitol 5-phosphate + CTP + H(+) = CDP-L-ribitol + diphosphate. Its pathway is cell wall biogenesis; poly(ribitol phosphate) teichoic acid biosynthesis. Functionally, catalyzes the transfer of the cytidylyl group of CTP to D-ribitol 5-phosphate. The protein is Ribitol-5-phosphate cytidylyltransferase of Streptococcus pneumoniae serotype 19F (strain G54).